Here is a 737-residue protein sequence, read N- to C-terminus: Probable beta-glucosidase L (737 aa).

The N-terminal stretch at 1–19 (MRSLIRSGALNAFLAASLA) is a signal peptide. Residue asparagine 225 is glycosylated (N-linked (GlcNAc...) asparagine). Aspartate 253 is a catalytic residue. N-linked (GlcNAc...) asparagine glycosylation is found at asparagine 340, asparagine 365, and asparagine 608.

Belongs to the glycosyl hydrolase 3 family.

The protein localises to the secreted. It carries out the reaction Hydrolysis of terminal, non-reducing beta-D-glucosyl residues with release of beta-D-glucose.. Its pathway is glycan metabolism; cellulose degradation. Functionally, beta-glucosidases are one of a number of cellulolytic enzymes involved in the degradation of cellulosic biomass. Catalyzes the last step releasing glucose from the inhibitory cellobiose. This is Probable beta-glucosidase L (bglL) from Emericella nidulans (strain FGSC A4 / ATCC 38163 / CBS 112.46 / NRRL 194 / M139) (Aspergillus nidulans).